The sequence spans 135 residues: UPF0355 protein SH2586 (135 aa).

Positions 105 to 135 (NSSHDEVEENNSAYEEIDITHYANESKGPKS) are disordered.

This sequence belongs to the UPF0355 family.

The polypeptide is UPF0355 protein SH2586 (Staphylococcus haemolyticus (strain JCSC1435)).